The following is a 576-amino-acid chain: Non-neuronal cytoplasmic intermediate filament protein (576 aa).

Residues 1–51 are disordered; sequence MTSKISTTYEEEGRQSKIQPRAFVITRSGPSSKSSSFSARQSYASSRQSIT. The tract at residues 2–75 is head; the sequence is TSKISTTYEE…FRGTREKEKR (74 aa). The segment covering 28–49 has biased composition (low complexity); sequence SGPSSKSSSFSARQSYASSRQS. Residues 73-425 form the IF rod domain; sequence EKREMQNLNE…KLLEGEESRV (353 aa). Residues 76–108 are coil 1A; that stretch reads EMQNLNERLASYIEKVHFLDAQVKKLEAENEAL. Residues 109 to 122 form a linker 1 region; sequence RNRKSESLQPIRDA. The interval 123–260 is coil 1B; the sequence is YENELAQARK…DLLDQLELLK (138 aa). The tract at residues 261–278 is linker 2; sequence PEPIQIKGMDYAEFWKSE. The tract at residues 279–425 is coil 2; that stretch reads LSKCVREIQS…KLLEGEESRV (147 aa). Residues 426–576 are tail; it reads GLRSLVEQAI…KATLIAKFSG (151 aa). Positions 456-574 constitute an LTD domain; that stretch reads GSMTIQRSSK…NEKATLIAKF (119 aa).

Belongs to the intermediate filament family. As to quaternary structure, can form homopolymers.

The protein resides in the cytoplasm. The chain is Non-neuronal cytoplasmic intermediate filament protein from Cornu aspersum (Brown garden snail).